The sequence spans 792 residues: Cadherin-11 (792 aa).

The first 22 residues, M1–A22, serve as a signal peptide directing secretion. Residues I23–R53 constitute a propeptide that is removed on maturation. 5 consecutive Cadherin domains span residues G54–F159, L160–F268, P269–F383, L384–P486, and K487–N608. Topologically, residues G54–T613 are extracellular. N455, N536, and N594 each carry an N-linked (GlcNAc...) asparagine glycan. A helical membrane pass occupies residues G614–V634. The Cytoplasmic segment spans residues T635–S792.

The protein localises to the cell membrane. Its function is as follows. Cadherins are calcium-dependent cell adhesion proteins. They preferentially interact with themselves in a homophilic manner in connecting cells; cadherins may thus contribute to the sorting of heterogeneous cell types. Required for proper focal adhesion assembly. Involved in the regulation of cell migration. The chain is Cadherin-11 (CDH11) from Gallus gallus (Chicken).